The chain runs to 299 residues: Homoserine kinase (299 aa).

Position 84–94 (84–94 (PISRGLGSSSA)) interacts with ATP.

The protein belongs to the GHMP kinase family. Homoserine kinase subfamily.

The protein localises to the cytoplasm. It carries out the reaction L-homoserine + ATP = O-phospho-L-homoserine + ADP + H(+). It participates in amino-acid biosynthesis; L-threonine biosynthesis; L-threonine from L-aspartate: step 4/5. Its function is as follows. Catalyzes the ATP-dependent phosphorylation of L-homoserine to L-homoserine phosphate. In Helicobacter hepaticus (strain ATCC 51449 / 3B1), this protein is Homoserine kinase.